An 85-amino-acid chain; its full sequence is Small ribosomal subunit protein bS16 (85 aa).

The protein belongs to the bacterial ribosomal protein bS16 family.

The chain is Small ribosomal subunit protein bS16 from Pseudomonas syringae pv. tomato (strain ATCC BAA-871 / DC3000).